The following is a 131-amino-acid chain: Large ribosomal subunit protein bL12 (131 aa).

The protein belongs to the bacterial ribosomal protein bL12 family. As to quaternary structure, homodimer. Part of the ribosomal stalk of the 50S ribosomal subunit. Forms a multimeric L10(L12)X complex, where L10 forms an elongated spine to which 2 to 4 L12 dimers bind in a sequential fashion. Binds GTP-bound translation factors.

In terms of biological role, forms part of the ribosomal stalk which helps the ribosome interact with GTP-bound translation factors. Is thus essential for accurate translation. The chain is Large ribosomal subunit protein bL12 from Nocardioides sp. (strain ATCC BAA-499 / JS614).